Here is a 147-residue protein sequence, read N- to C-terminus: Large ribosomal subunit protein uL15 (147 aa).

The segment at 1–46 is disordered; the sequence is MSIRLENLSYTPGARKEKHRKGRGHAAGKGKQAGRGQSGQKKRSTV. The span at 16–28 shows a compositional bias: basic residues; that stretch reads KEKHRKGRGHAAG.

Belongs to the universal ribosomal protein uL15 family. Part of the 50S ribosomal subunit.

Functionally, binds to the 23S rRNA. This is Large ribosomal subunit protein uL15 from Mesomycoplasma hyopneumoniae (strain 7448) (Mycoplasma hyopneumoniae).